A 515-amino-acid polypeptide reads, in one-letter code: Protein NRT1/ PTR FAMILY 4.1 (515 aa).

Helical transmembrane passes span 24–44 (GIKA…VFLA), 71–91 (FVGT…SFLT), 93–113 (FAAF…LTLQ), 134–154 (VLFT…GSLP), 168–188 (LISG…FLAV), 204–224 (FTIS…GCPM), 298–318 (FLAL…VAQM), 339–359 (IPVA…LALY), 381–401 (IGYG…VEVK), 413–433 (ISVF…MLTV), 461–481 (AMGF…TGWL), and 492–512 (LFYL…IFWA).

Belongs to the major facilitator superfamily. Proton-dependent oligopeptide transporter (POT/PTR) (TC 2.A.17) family. As to expression, expressed in siliques and flowers.

It is found in the membrane. Its function is as follows. Involved in (+) and (-)-abscisic acid transport (ABA) and in gibberellin import. In Arabidopsis thaliana (Mouse-ear cress), this protein is Protein NRT1/ PTR FAMILY 4.1 (NPF4.1).